The chain runs to 4731 residues: MESEEGNAEPPPPSEEAPPPVVEEAPPPLPPEDTAPPPPEEQAPPPEGDAAPPPTGDAFQLTVEGEAPHPEDPKLLSEQGPATSVTDYRSLIPSDEEVTLPEDEESGQARVRARHTPRPAQSVLSDGISQSSRRPSKFRRSMTGIPNLQETLKEKQARFREARENRKMKIGPSHKYIFEVLGEKLGLDLVTVEELILDCPSLDPFTSFFEKGGCKTLKFLYQEGEVPGFECGRTITGVPKGGKMMRIYVDNAAPDKLKGLCLFFVRCRNDVAINSKTIHEDVLFSFLDASKGLLEGIKHMLKSIFLPAILATSNWGALNQSKQGESEKHIFIETIHRYLASLDDATISIEGTVMLKKVDNIDFSKLHTFEEVTAAASSSEMVHQLEEVLMVWYKQIEQVLIESEQMRKEADDSGPLTELEHWKRMSAKFNFIIEQIKGSNCKAVINVLNVAHSKLLKNWRDLDARITDSANESKDNVRYLYTLEKVCQPLYNYDLVSMAHGIQNLINAIRMIHSVSRYYNTSERMTSLFIKVTNQMVTACKAYITDGGTNHVWDQETPAVLKKIQDCIFLFKEYQASFHKTRKQILESSGEKSFEVSEMYIFGKFEAFCKRLEKITEMITIVQTYSALSNSTIEGIDILGIKFKNIYQGIKKNQYDILDPRRTEFDTDFTEFMGKINILEIQIQAFMNSTFGKILSSQQALQLLQRFQKLNIPCLHLEINHTIERILQCYVAELEFTKKLYLSQKDDPPLARNMPPIAGKILWVRQLFRRINEPINYFFKNSDILSSTEGKAVIRQYNRIAYVLVEFEVAYHTAWFKEVSQLQYALQATLFVRHPETGKLLVNFDPKILEVVRETKCMIKMKLDVPEQAKNLLKLESKLKADKLYLQGLLQYYDDLCQEVPSVFVNLMTPKMKKVESVLRQGLTVLTWSSLMLESFFKEVESVLDMFNQLLKKVNDLCEMHIDTVLKEIAKTLLISLSDSGTTKVEDMLTLNETYTKECADILNHKSRHVEEAVKELILIFEQIYEVKYTGKAAKSVKEQRKRVVFGSEAEETEGLDFESTTMEVDTNDKEDEFKKECKEVYAFFSHQLLDSLQKATRLSLDTMKRRIFVGSQGRRRSEDIVSFIKTEVHLAIPNVVMVPSLDDIQQAINRMIQLTLEVSRGVAHWGQQQVRQIKSFQNNSRGSDQPPASGKPLKKEERSFEETIPARKLKNFYPGVAEHKDISKLVLLLSSSVNSLRKAATEALQDFQKYKTLWIEDRHVKVKEFLANNPSLTEIRSEILHYATLEQEIKELKPIIVVGSLELHTEPMKLALSIEAKAWKMLLCRYLNEEYKKKMSDMITFINEYLKKLSRPIRDLDDVRFAMEALSCIRDNEIQMDMTLGPIEEAYGILNRFEVKVTKEESEGVDTLRYSFNKLQSKAVSVQGELVKVQPKFKSNLLESVKVFCEDVINFTEAYETEGPMVPNIPPQEASNRLQIFQANFDDLWRKFVTYSSGEQLFGLPVTDYEVLHKTRKELNLLQKLYGLYDTVMGSISGYYEILWGDVDIEKINAELQEFQNRCRKLPRALKDWQAFLDLKKRIDDFSESCPLLEMMTNKAMKQRHWDRISELTGTPFDVESDTFCLRNIMEAPLLKNKDDIEDICISAIKEKDIEAKLTQVIENWTYQNLSFAAFKGKGELLLKGTESGEIITLMEDSLMVLGSLLSNRYNTPFKKNIQNWVFKLSTSSDIIEEWLIVQNLWVYLEAVFVGGDIAKQLPQEAKRFQNIDKSWIKIMQRAHENPNVISCCVGDETMGQLLPHLHEQLEVCQKSLTGYLEKKRLLFPRFFFVSDPVLLEILGQASDSHTIQPHLPAVSDNINEVTFHAKDYDRMTAVISREGEKIMLDTPVMAKGPVEIWLLDLLKVQMSSLHNIIRSAFYQISDSGFLLLPFLNHFPAQVGLLGIQMLWTHDSEEALNNAKDDRKIMQITNQKFLDILNTLISQTTHDLTKFDRVKFETLITIHVHQRDIFDDLVKMHIKSVTDFEWLKQSRFYFKEDLDQTVVSITDVDFIYQNEFLGCTDRLVITPLTDRCYITLAQALGMNMGGAPAGPAGTGKTETTKDMGRCLGKYVVVFNCSDQMDFRGLGRIFKGLAQSGSWGCFDEFNRIELPVLSVAAQQIYIVLTARKERKKQFIFSDGDCVDLNPEFGIFLTMNPGYAGRQELPENLKIQFRTVAMMVPDRQIIMRVKLASCGFLENVILAQKFYVLYKLCEEQLTKQVHYDFGLRNILSVLRTLGSQKRARPEDSELSTVMRGLRDMNLSKLVDEDEPLFLSLINDLFPGLQLDSSTYAELQSAVDNQVNLEGLINHPPWNLKLVQLYETSLVRHGLMTLGPSGSGKTTVITILMKSLTECGRPHREMRMNPKAITAPQMFGRLDTATNDWTDGIFSTLWRKTLKAKKGENIFLILDGPVDAIWIENLNSVLDDNKTLTLANGDRIPMAPTCKLLFEVHNIENASPATVSRMGMVYISSSALSWRPILQAWLKKRSQQEASVFLSLYDKVFEDAYTYMKLSLNPKMQLLECNYIMQSLNLLEGLIPSKEEGGVSSGDHLHKLFVFGLMWSLGALLELDSREKLEVFLRGHGSKLNLPEIPKGSQQTMYEFYVTDYGDWEHWNKRIQPYFYPTDSIPEYSSILVPNVDNIRTNFLIDTIAKQHKAVLLTGEQGTAKTVMVKAYLKKYDPEVQLSKSLNFSSATEPMMFQRTIESYVDKRMGSTYGPPGGRKMTVFIDDINMPVINEWGDQITNEIVRQMMEMEGMYSLDKPGDFTTIVDVQLIAAMIHPGGGRNDIPQRLKRQFTVFNCTLPSNTSIDKIFGIIGCGYFDPCRKFRPEICDMVGNLVSVSRVLWQWTKVKMLPTPSKFHYIFNLRDLSRIWQGMLTVKAEECSSIPILLSLFKHECNRVIADRFITPDDEQWFNSQLIRAVEENISPEVAANILPEPYFVDFLRDMPEPTGDEPEDTMFEVPKIYELVPSFEFLSEKLQFYQRQFNEIIRGTSLDLVFFKDAMTHLVKISRIIRTSCGNALLVGVGGSGKQSLSKLASFIAGYQIFQITLTRSYNVSNLIEDLKNLYKVAGAEGKGITFIFTDNEIKDEAFLEYLNNLLSSGEISNLFARDEMDEITQGLISVMKRELPRHPPTFDNLYEYFITRSRKNLHVVLCFSPVGEKFRARSLKFPGLISGCTMDWFSRWPKEALIAVASYFLLDYNIVCSIETKRHVVETMGLFHDMVSESCENYFQRYRRRAHVTPKSYLSFINGYKSIYTDKVKYINEQAERMNIGLDKLMEASESVAKLSQDLAVKEKELAVASIKADEVLAEVTVSAQASAKVKNEVQEVKDKAQKIVDEIDSEKVKAETKLEAAKPALEEAEAALNTIKPNDIATVRKLAKPPHLIMRIMDCVLLLFQKKIDPVTMDPEKPCCKPSWGESLKLMSATGFLFSLQQFPKDTINEETVELLQPYFNMDDYTFESAKKVCGNVAGLLSWTLAMVIFYGINREVLPLKANLAKQEGRLAVANVELGKAQALLDEKQAELDKVQAKFDAAMKEKMDLLNDADMCRKKMQAASTLIDGLSGEKVRWTQQSKEFKTQINRLVGDVLLCTGFLSYLGPFNQIFRNYLLKDQWELELKARKIPFTENLNLIAMLVDPPTIGEWGLQGLPGDDLSIQNGIIVTKATRYPLLIDPQTQGKTWIKSKEKENDLQVTSLNHKYFRTHLEDSLSLGRPLLIEDIREELDPALDNVLEKNFIKSGTAFKVKVGDKECDIMDTFKLYITTKLPNPAFTPEINAKTSVIDFTVTMKGLENQLLRRVILTEKQELESERVKLLEDVTFNKRKMKELEDNLLYKLSATKGSLVDDESLIGVLRITKQTAAEVSEKLHVAAETEIKINTAQEEFRPAATRGSILYFLITEMSMVNIMYQTSLAQFLKLFDQSMARSEKSPLPQKRITNIIEYLTYEVFTYSVRGLYENHKFLFVLLMTLKIDLQRGTVKHKEFQALIKGGAALDLKACPPKPFRWILDMTWLNLVELSKLPQFAEIMNQISRNEKGWKNWFDKDAPEEEIIPDGYNDSLDTCRKLLLIRSWCPDRTVFQARKYIADSLEEKYTEPVILNLEKTWEESDTHTPLICFLSMGSDPTIQIDALAKKLKLECRTISMGQGQEVHARKLIQLSMQQGGWVLLQNCHLGLEFMEELLEMLMVTETTEDSFRVWITTEPHDRFPITLLQTSIKFTNEPPQGVRAGLKRTFAGINQDLLDISNLPMWKPMLYTVAFLHSTVQERRKFGPLGWNIPYEFNSADFSASVQFIQNHLDECDIKKGVSWSTVRYMIGEVQYGGRVTDDFDKRLLNCFARVWFSEKMFEPSFCFYTGYKIPICKTLDQYFEFIQSLPSLDNPEVFGLHPNADITYQSNTASDVLETITNIQPKESGGGVGETREAIVYRLSEDMLSKLPPNYVPHEVKARLMKMGHLNSMNIFLRQEIDRMQKVISILRSSLSDLKLAIEGTIIMSENLRDALDNMYDARIPQLWKRVSWDSSTLGFWFTELLERNAQFSTWIFEGRPNVFWMTGFFNPQGFLTAMRQEVTRAHKGWALDTVTIHNEVLRQTKEEIITPPAEGVYIYGLYMDGASWDRRNGKLTESTPKVLFTQLPVLHIFAINSTAPKDPKLYVCPIYKKPRRTDLTFITVVYLRTVLSPDHWILRGVALLCDIK.

A disordered region spans residues 1 to 145 (MESEEGNAEP…SKFRRSMTGI (145 aa)). The segment covering 9 to 55 (EPPPPSEEAPPPVVEEAPPPLPPEDTAPPPPEEQAPPPEGDAAPPPT) has biased composition (pro residues). Over residues 66 to 75 (EAPHPEDPKL) the composition is skewed to basic and acidic residues. The segment covering 94–106 (SDEEVTLPEDEES) has biased composition (acidic residues). Over residues 122–133 (SVLSDGISQSSR) the composition is skewed to polar residues. The stretch at 145–169 (IPNLQETLKEKQARFREARENRKMK) forms a coiled coil. Position 917 is a phosphoserine (Ser-917). Positions 1177-1201 (FQNNSRGSDQPPASGKPLKKEERSF) are disordered. Residues 1543 to 1567 (DVDIEKINAELQEFQNRCRKLPRAL) adopt a coiled-coil conformation. AAA regions lie at residues 2049-2271 (YQNE…VLRT), 2331-2550 (SAVD…KLSL), 2657-2910 (FYPT…IWQG), and 3021-3275 (QFNE…YRRR). Residues 2087–2094 (GPAGTGKT) and 2369–2376 (GPSGSGKT) each bind ATP. Residues 3290–3587 (YKSIYTDKVK…MDLLNDADMC (298 aa)) are stalk. Coiled-coil stretches lie at residues 3313–3405 (DKLM…ALNT), 3531–3583 (LKAN…LLND), and 3836–3871 (RVILTEKQELESERVKLLEDVTFNKRKMKELEDNLL). AAA stretches follow at residues 3673–3903 (LVDP…EVSE) and 4118–4332 (ARKY…FIQN).

It belongs to the dynein heavy chain family. In terms of assembly, consists of at least two heavy chains and a number of intermediate and light chains. As to expression, isoform 1 and/or isoform 2 are expressed in spermatocytes and mature sperm (at protein level). Testis-specific. Accumulates exclusively in mid to late spermatocytes.

It localises to the cytoplasm. Its subcellular location is the cytoskeleton. It is found in the flagellum axoneme. Functionally, force generating protein component of the outer dynein arms (ODAs) in the sperm flagellum. Produces force towards the minus ends of microtubules. Dynein has ATPase activity; the force-producing power stroke is thought to occur on release of ADP. Involved in sperm motility; implicated in sperm flagellar assembly. In Mus musculus (Mouse), this protein is Dynein axonemal heavy chain 8 (Dnah8).